A 325-amino-acid polypeptide reads, in one-letter code: Delta(1)-pyrroline-2-carboxylate reductase (325 aa).

Belongs to the ornithine cyclodeaminase/mu-crystallin family.

The catalysed reaction is L-proline + NAD(+) = 1-pyrroline-2-carboxylate + NADH + H(+). It carries out the reaction L-proline + NADP(+) = 1-pyrroline-2-carboxylate + NADPH + H(+). Catalyzes the reduction of Delta(1)-pyrroline-2-carboxylate (Pyr2C) to L-proline, using preferentially NADPH over NADH as the electron donor. Is likely involved in a degradation pathway that converts trans-3-hydroxy-L-proline (t3LHyp) to L-proline. This chain is Delta(1)-pyrroline-2-carboxylate reductase, found in Bacillus cereus (strain ATCC 10987 / NRS 248).